The following is a 629-amino-acid chain: Chaperone protein HtpG (629 aa).

Residues 1 to 335 (MSEVETSVEK…TADLPLNVSR (335 aa)) are a; substrate-binding. The b stretch occupies residues 336 to 551 (EMIQESPLLA…EQGPDRQLQK (216 aa)). The tract at residues 552-629 (MLQDAGRIEG…SRVFGRALKE (78 aa)) is c.

The protein belongs to the heat shock protein 90 family. Homodimer.

The protein resides in the cytoplasm. Molecular chaperone. Has ATPase activity. The sequence is that of Chaperone protein HtpG from Rhizobium meliloti (strain 1021) (Ensifer meliloti).